The following is a 360-amino-acid chain: BLOC-1-related complex subunit 6 (360 aa).

The disordered stretch occupies residues 1-201 (MEAAQGRLGP…TGAGGGRRAT (201 aa)). The segment covering 23–33 (ATFSGRPSRTP) has biased composition (polar residues). T41 carries the phosphothreonine modification. Phosphoserine is present on S130. Positions 144–155 (EGDDDDDEDEEA) are enriched in acidic residues. S173 carries the phosphoserine modification. Positions 179–198 (GACGGGGSSSSGETGAGGGR) are enriched in gly residues. Phosphothreonine is present on T201. S204 carries the phosphoserine modification.

The protein belongs to the BORCS6 family. Component of the BLOC-one-related complex (BORC) which is composed of BLOC1S1, BLOC1S2, BORCS5, BORCS6, BORCS7, BORCS8, KXD1 and SNAPIN.

The protein localises to the lysosome membrane. In terms of biological role, as part of the BORC complex may play a role in lysosomes movement and localization at the cell periphery. Associated with the cytosolic face of lysosomes, the BORC complex may recruit ARL8B and couple lysosomes to microtubule plus-end-directed kinesin motor. This chain is BLOC-1-related complex subunit 6, found in Mus musculus (Mouse).